A 348-amino-acid polypeptide reads, in one-letter code: MTDERGNFYYNTPPPPLRYPSNPATAIFTNAQTYNNAPGYVPPATRDNKMDTSRSNSTNSVAIAPYNKSKEPTLDAGESIWYNKCVDFVQKIIRYYRCNDMSELSPLMIHFINTIRDMCIDTNPINVNVVKRFESEETMIRHLIRLQKELGQGNAAESLPSDSNIFQASFVLNSLPAYAQKFYNGGADMLGKDALAEAAKQLSLAVQYMVAESVTCNIPIPLPFNQQLANNYMTLLLKHATLPPNIQSAVESRRFPHINMINDLINAVIDDLFAGGGDYYYYVLNEKNRARIMSLKENVAFLAPLSASANIFNYMAELATRAGKQPSMFQNATFLTSAPTRSIRLPLI.

Belongs to the baculoviridae gp41 family. O-glycosylated; contains N-acetylglucosamine side chains.

This chain is Structural glycoprotein p40 (P40), found in Bombyx mori nuclear polyhedrosis virus (BmNPV).